Reading from the N-terminus, the 425-residue chain is Serine hydroxymethyltransferase (425 aa).

(6S)-5,6,7,8-tetrahydrofolate-binding positions include Leu122 and 126 to 128 (GHL). Lys231 carries the post-translational modification N6-(pyridoxal phosphate)lysine. 355-357 (SPF) is a binding site for (6S)-5,6,7,8-tetrahydrofolate.

This sequence belongs to the SHMT family. As to quaternary structure, homodimer. Requires pyridoxal 5'-phosphate as cofactor.

The protein localises to the cytoplasm. It catalyses the reaction (6R)-5,10-methylene-5,6,7,8-tetrahydrofolate + glycine + H2O = (6S)-5,6,7,8-tetrahydrofolate + L-serine. Its pathway is one-carbon metabolism; tetrahydrofolate interconversion. It functions in the pathway amino-acid biosynthesis; glycine biosynthesis; glycine from L-serine: step 1/1. Its function is as follows. Catalyzes the reversible interconversion of serine and glycine with tetrahydrofolate (THF) serving as the one-carbon carrier. This reaction serves as the major source of one-carbon groups required for the biosynthesis of purines, thymidylate, methionine, and other important biomolecules. Also exhibits THF-independent aldolase activity toward beta-hydroxyamino acids, producing glycine and aldehydes, via a retro-aldol mechanism. The polypeptide is Serine hydroxymethyltransferase (Rippkaea orientalis (strain PCC 8801 / RF-1) (Cyanothece sp. (strain PCC 8801))).